Here is a 335-residue protein sequence, read N- to C-terminus: Interleukin-12 subunit beta (335 aa).

The first 22 residues, 1–22 (MCPQKLTISWFAIVLLVSPLMA), serve as a signal peptide directing secretion. An Ig-like C2-type domain is found at 23 to 106 (MWELEKDVYV…LSHSHLLLHK (84 aa)). N-linked (GlcNAc...) asparagine glycosylation occurs at N47. A disulfide bond links C50 and C90. Residues N122, N132, and N220 are each glycosylated (N-linked (GlcNAc...) asparagine). The 92-residue stretch at 233 to 324 (PDPPKNLQMK…QDRYYNSSCS (92 aa)) folds into the Fibronectin type-III domain.

The protein belongs to the IL-12B family. As to quaternary structure, heterodimer with IL12A; disulfide-linked. The heterodimer is known as interleukin IL-12. Heterodimer with IL23A; disulfide-linked. The heterodimer is known as interleukin IL-23. Also secreted as a monomer. Interacts with NBR1; this interaction promotes IL-12 secretion.

Its subcellular location is the secreted. In terms of biological role, cytokine that can act as a growth factor for activated T and NK cells, enhance the lytic activity of NK/lymphokine-activated killer cells, and stimulate the production of IFN-gamma by resting PBMC. Its function is as follows. Associates with IL23A to form the IL-23 interleukin, a heterodimeric cytokine which functions in innate and adaptive immunity. IL-23 may constitute with IL-17 an acute response to infection in peripheral tissues. IL-23 binds to a heterodimeric receptor complex composed of IL12RB1 and IL23R, activates the Jak-Stat signaling cascade, stimulates memory rather than naive T-cells and promotes production of pro-inflammatory cytokines. IL-23 induces autoimmune inflammation and thus may be responsible for autoimmune inflammatory diseases and may be important for tumorigenesis. The chain is Interleukin-12 subunit beta (Il12b) from Mus musculus (Mouse).